The following is a 277-amino-acid chain: Uridine phosphorylase (277 aa).

It belongs to the PNP/UDP phosphorylase family.

Its subcellular location is the cytoplasm. It catalyses the reaction uridine + phosphate = alpha-D-ribose 1-phosphate + uracil. Its pathway is pyrimidine metabolism; UMP biosynthesis via salvage pathway; uracil from uridine (phosphorylase route): step 1/1. In terms of biological role, catalyzes the reversible phosphorylytic cleavage of uridine to uracil and ribose-1-phosphate. In Thermococcus kodakarensis (strain ATCC BAA-918 / JCM 12380 / KOD1) (Pyrococcus kodakaraensis (strain KOD1)), this protein is Uridine phosphorylase.